The primary structure comprises 245 residues: tRNA pseudouridine synthase A (245 aa).

D52 (nucleophile) is an active-site residue. Position 111 (Y111) interacts with substrate.

It belongs to the tRNA pseudouridine synthase TruA family. Homodimer.

The catalysed reaction is uridine(38/39/40) in tRNA = pseudouridine(38/39/40) in tRNA. Functionally, formation of pseudouridine at positions 38, 39 and 40 in the anticodon stem and loop of transfer RNAs. This is tRNA pseudouridine synthase A from Afipia carboxidovorans (strain ATCC 49405 / DSM 1227 / KCTC 32145 / OM5) (Oligotropha carboxidovorans).